We begin with the raw amino-acid sequence, 241 residues long: Uridylate kinase (241 aa).

ATP is bound at residue 14 to 17 (KLSG). The segment at 22 to 27 (GGLGMG) is involved in allosteric activation by GTP. Residue glycine 56 coordinates UMP. ATP-binding residues include glycine 57 and arginine 61. UMP contacts are provided by residues aspartate 77 and 138–145 (TGNPFFTT). ATP is bound by residues threonine 165, tyrosine 171, and aspartate 174.

Belongs to the UMP kinase family. Homohexamer.

Its subcellular location is the cytoplasm. It carries out the reaction UMP + ATP = UDP + ADP. Its pathway is pyrimidine metabolism; CTP biosynthesis via de novo pathway; UDP from UMP (UMPK route): step 1/1. With respect to regulation, allosterically activated by GTP. Inhibited by UTP. In terms of biological role, catalyzes the reversible phosphorylation of UMP to UDP. This Psychrobacter sp. (strain PRwf-1) protein is Uridylate kinase.